Reading from the N-terminus, the 385-residue chain is Mannitol-1-phosphate 5-dehydrogenase (385 aa).

NAD(+) is bound at residue 3–14 (AVHFGAGNIGRG).

Belongs to the mannitol dehydrogenase family.

It catalyses the reaction D-mannitol 1-phosphate + NAD(+) = beta-D-fructose 6-phosphate + NADH + H(+). The chain is Mannitol-1-phosphate 5-dehydrogenase from Geobacillus thermodenitrificans (strain NG80-2).